The primary structure comprises 87 residues: Small ribosomal subunit protein bS20 (87 aa).

The segment at 1–26 is disordered; that stretch reads MANIKSAKKRAIQAEKARKHNASRRS.

Belongs to the bacterial ribosomal protein bS20 family.

Binds directly to 16S ribosomal RNA. The polypeptide is Small ribosomal subunit protein bS20 (Tolumonas auensis (strain DSM 9187 / NBRC 110442 / TA 4)).